A 429-amino-acid chain; its full sequence is Fumarylacetoacetase (429 aa).

Aspartate 139 provides a ligand contact to Ca(2+). Histidine 146 functions as the Proton acceptor in the catalytic mechanism. Arginine 155 contacts substrate. Ca(2+) is bound by residues glutamate 212, glutamate 214, and aspartate 246. Aspartate 246 is a binding site for Mg(2+). Glutamine 253 contributes to the substrate binding site. Mg(2+) contacts are provided by lysine 266 and threonine 270. Position 363 (threonine 363) interacts with substrate.

The protein belongs to the FAH family. The cofactor is Ca(2+). Mg(2+) serves as cofactor.

It carries out the reaction 4-fumarylacetoacetate + H2O = acetoacetate + fumarate + H(+). It participates in amino-acid degradation; L-phenylalanine degradation; acetoacetate and fumarate from L-phenylalanine: step 6/6. Functionally, converts fumarylacetoacetate to acetoacetate and fumarate. Involved in tyrosine catabolic pathway. Catalyzes the final step in the tyrosine degradation pathway. The chain is Fumarylacetoacetase from Oryza sativa subsp. japonica (Rice).